The sequence spans 603 residues: Geraniol synthase Tps-5031G8, chloroplastic (603 aa).

Residues 1 to 35 (MCSISQKVVIGLNKAAANNCLQNLDRRGFKTRRVS) constitute a chloroplast transit peptide. Residues Arg319, Asp356, Asp360, Arg497, and Asp500 each contribute to the (2E)-geranyl diphosphate site. Mg(2+) is bound by residues Asp356 and Asp360. A DDXXD motif motif is present at residues 356–360 (DDVYD). The Mg(2+) site is built by Asp500, Thr504, and Glu508.

It belongs to the terpene synthase family. Tpsb subfamily. In terms of assembly, monomer. Mg(2+) is required as a cofactor. Requires Mn(2+) as cofactor.

The protein resides in the plastid. The protein localises to the chloroplast. It catalyses the reaction (2E)-geranyl diphosphate + H2O = (2E)-geraniol + diphosphate. Its pathway is secondary metabolite biosynthesis; terpenoid biosynthesis. In terms of biological role, monoterpene synthase (mono-TPS) involved in the biosynthesis of monoterpenes natural products. Catalyzes the conversion of (2E)-geranyl diphosphate (GPP) into geraniol. In Perilla frutescens var. hirtella (Perilla citriodora), this protein is Geraniol synthase Tps-5031G8, chloroplastic.